We begin with the raw amino-acid sequence, 95 residues long: uncharacterized protein (95 aa).

This is an uncharacterized protein from Acidianus hospitalis (AFV-1).